Consider the following 922-residue polypeptide: Pertactin autotransporter (922 aa).

The signal sequence occupies residues 1–34; sequence MNMSLSRIVKAAPLRRTTLAMALGALGAAPAAYA. The short motif at 260–262 is the Cell attachment site; involved in adhesion to various eukaryotic cell lines element; the sequence is RGD. 3 tandem repeats follow at residues 266–270, 271–275, and 276–280. The interval 266-290 is 4 X 5 AA tandem repeats of G-G-A-V-P; sequence GGAVPGGAVPGGAVPGGFGPLLDGW. A 4; approximate repeat occupies 281 to 285; the sequence is GGFGP. The disordered stretch occupies residues 561–619; it reads SLVGAKAPPAPKPAPQPGPQPGPQPPQPPQPPQPPQPPQPPQRQPEAPAPQPPAGRELS. The span at 568 to 613 shows a compositional bias: pro residues; it reads PPAPKPAPQPGPQPGPQPPQPPQPPQPPQPPQPPQRQPEAPAPQPP. The interval 575–603 is 9 X 3 AA approximate repeats of P-Q-P; it reads PQPGPQPGPQPPQPPQPPQPPQPPQPPQR. The Autotransporter domain occupies 654 to 922; it reads LNPDAGGAWG…TFHAGYRYSW (269 aa).

Monomer.

Its subcellular location is the periplasm. It localises to the secreted. It is found in the cell surface. The protein resides in the cell outer membrane. Its function is as follows. Agglutinogen that binds to eukaryotic cells; a process mediated by the R-G-D sequence. Pertactin may have a role in bacterial adhesion, and thus play a role in virulence. May contribute to the disease state of whooping cough. The chain is Pertactin autotransporter (prn) from Bordetella parapertussis (strain 12822 / ATCC BAA-587 / NCTC 13253).